An 875-amino-acid chain; its full sequence is Serine/threonine-protein kinase D2 (875 aa).

The tract at residues 1–33 (MAAAPSHPAGLPCSPGPGSPPPPGGSDLQSLPP) is disordered. The segment covering 14–24 (SPGPGSPPPPG) has biased composition (pro residues). S26 and S30 each carry phosphoserine. Y87 carries the phosphotyrosine modification. The segment at 138–188 (PHALTVHSYRAPAFCDHCGEMLFGLVRQGLKCDGCGLNYHKRCAFSIPNNC) adopts a Phorbol-ester/DAG-type 1 zinc-finger fold. S197, S198, S200, S203, S206, S211, S212, and S214 each carry phosphoserine. Positions 224 to 247 (RSTTDLLPRRPPSSSSSSSSSSFY) are disordered. The segment covering 236-245 (SSSSSSSSSS) has biased composition (low complexity). S244 carries the phosphoserine; by CSNK1D and CSNK1E modification. S245 is subject to Phosphoserine. The Phorbol-ester/DAG-type 2 zinc finger occupies 265-315 (PHTFLIHSYTRPTVCQACKKLLKGLFRQGLQCKDCKFNCHKRCATRVPNDC). The 113-residue stretch at 398 to 510 (TTLREGWVVH…WETAIRQALM (113 aa)) folds into the PH domain. Y408 is modified (phosphotyrosine). Y439 carries the phosphotyrosine; by ABL1 modification. S519 is modified (phosphoserine). A Protein kinase domain is found at 552–808 (IFPDEVLGSG…VDKSLSHPWL (257 aa)). ATP-binding positions include 558-566 (LGSGQFGVV) and K581. The Proton acceptor role is filled by D675. S707 is modified (phosphoserine; by PKC). Position 711 is a phosphoserine (S711). Position 718 is a phosphotyrosine; by ABL1 (Y718). The short motif at 725-727 (LNQ) is the Important for ABL1-mediated Tyr-718 phosphorylation element. Position 873 is a phosphoserine; by autocatalysis (S873).

It belongs to the protein kinase superfamily. CAMK Ser/Thr protein kinase family. PKD subfamily. As to quaternary structure, interacts (via C-terminus) with LCK. Interacts (via N-terminus and zing-finger domain 1 and 2) with PRKCD in response to oxidative stress; the interaction is independent of PRKD2 tyrosine phosphorylation. The cofactor is Mg(2+). Phosphorylation of Ser-873 correlates with the activation status of the kinase. Ser-707 is probably phosphorylated by PKC. Phosphorylation at Ser-244 by CSNK1D and CSNK1E promotes nuclear localization and substrate targeting. Phosphorylation at Ser-244, Ser-707 and Ser-711 is required for nuclear localization. Phosphorylated at Tyr-438 by ABL1 in response to oxidative stress. Phosphorylated at Tyr-718 by ABL1 specifically in response to oxidative stress; requires prior phosphorylation at Ser-707 or/and Ser-711.

Its subcellular location is the cytoplasm. The protein resides in the cell membrane. It is found in the golgi apparatus. It localises to the trans-Golgi network. It catalyses the reaction L-seryl-[protein] + ATP = O-phospho-L-seryl-[protein] + ADP + H(+). The enzyme catalyses L-threonyl-[protein] + ATP = O-phospho-L-threonyl-[protein] + ADP + H(+). With respect to regulation, activated by DAG and phorbol esters. Phorbol-ester/DAG-type domains bind DAG, mediating translocation to membranes. Autophosphorylation of Ser-711 and phosphorylation of Ser-707 by PKC relieves auto-inhibition by the PH domain. Catalytic activity is further increased by phosphorylation at Tyr-718 in response to oxidative stress. Functionally, serine/threonine-protein kinase that converts transient diacylglycerol (DAG) signals into prolonged physiological effects downstream of PKC, and is involved in the regulation of cell proliferation via MAPK1/3 (ERK1/2) signaling, oxidative stress-induced NF-kappa-B activation, inhibition of HDAC7 transcriptional repression, signaling downstream of T-cell antigen receptor (TCR) and cytokine production, and plays a role in Golgi membrane trafficking, angiogenesis, secretory granule release and cell adhesion. May potentiate mitogenesis induced by the neuropeptide bombesin by mediating an increase in the duration of MAPK1/3 (ERK1/2) signaling, which leads to accumulation of immediate-early gene products including FOS that stimulate cell cycle progression. In response to oxidative stress, is phosphorylated at Tyr-438 and Tyr-718 by ABL1, which leads to the activation of PRKD2 without increasing its catalytic activity, and mediates activation of NF-kappa-B. In response to the activation of the gastrin receptor CCKBR, is phosphorylated at Ser-244 by CSNK1D and CSNK1E, translocates to the nucleus, phosphorylates HDAC7, leading to nuclear export of HDAC7 and inhibition of HDAC7 transcriptional repression of NR4A1/NUR77. Upon TCR stimulation, is activated independently of ZAP70, translocates from the cytoplasm to the nucleus and is required for interleukin-2 (IL2) promoter up-regulation. During adaptive immune responses, is required in peripheral T-lymphocytes for the production of the effector cytokines IL2 and IFNG after TCR engagement and for optimal induction of antibody responses to antigens. In epithelial cells stimulated with lysophosphatidic acid (LPA), is activated through a PKC-dependent pathway and mediates LPA-stimulated interleukin-8 (IL8) secretion via a NF-kappa-B-dependent pathway. During TCR-induced T-cell activation, interacts with and is activated by the tyrosine kinase LCK, which results in the activation of the NFAT transcription factors. In the trans-Golgi network (TGN), regulates the fission of transport vesicles that are on their way to the plasma membrane and in polarized cells is involved in the transport of proteins from the TGN to the basolateral membrane. Plays an important role in endothelial cell proliferation and migration prior to angiogenesis, partly through modulation of the expression of KDR/VEGFR2 and FGFR1, two key growth factor receptors involved in angiogenesis. In secretory pathway, is required for the release of chromogranin-A (CHGA)-containing secretory granules from the TGN. Downstream of PRKCA, plays important roles in angiotensin-2-induced monocyte adhesion to endothelial cells. The protein is Serine/threonine-protein kinase D2 (Prkd2) of Rattus norvegicus (Rat).